Reading from the N-terminus, the 860-residue chain is SH2 domain-containing protein 3C (860 aa).

A Phosphoserine modification is found at Ser-22. Disordered stretches follow at residues 51–117 (EATQ…PPGL) and 130–180 (PLED…PEAG). Over residues 162-175 (ERPPRDVHSERAAG) the composition is skewed to basic and acidic residues. Residues 220–319 (WYHGRIPREV…QSGAIIYCPV (100 aa)) enclose the SH2 domain. Phosphotyrosine is present on residues Tyr-278 and Tyr-283. The segment at 335 to 537 (GQGSSKPASP…LSENGAPEGD (203 aa)) is disordered. Ser-359 carries the phosphoserine modification. Composition is skewed to low complexity over residues 405 to 420 (SPMS…PAYS), 427 to 443 (AAPA…SPVA), and 479 to 490 (SPSPSLSSYSDP). At Ser-440 the chain carries Phosphoserine. The Ras-GEF domain maps to 586–854 (DARTLARHVT…TALSHKLEPA (269 aa)). Tyr-793 carries the phosphotyrosine modification.

As to quaternary structure, component of a complex comprised of SH2D3C, BCAR1/CAS, and CRK. Within the complex, interacts with CRK and (via C-terminus) with BCAR1/CAS (via C-terminus). Interacts with NEDD9/HEF1. Interacts with EPHB2. In terms of assembly, interacts with NEDD9/HEF1. Interacts with BCAR1/CAS. Interacts with PTK2B. Interacts (via C-terminus) with BCAR1/CAS (via C-terminus). Interacts with IGF1. Post-translationally, phosphorylated by MAPK/ERK upon T-cell receptor stimulation in T-cells. As to expression, ubiquitously expressed.

It is found in the cytoplasm. The protein localises to the cell membrane. The protein resides in the cell projection. It localises to the axon. Its subcellular location is the ruffle membrane. Acts as an adapter protein that mediates cell signaling pathways involved in cellular functions such as cell adhesion and migration, tissue organization, and the regulation of the immune response. Plays a role in integrin-mediated cell adhesion through BCAR1-CRK-RAPGEF1 signaling and activation of the small GTPase RAP1. Promotes cell migration and invasion through the extracellular matrix. Required for marginal zone B-cell development and thymus-independent type 2 immune responses. Mediates migration and adhesion of B cells in the splenic marginal zone via promoting hyperphosphorylation of NEDD9/CASL. Plays a role in CXCL13-induced chemotaxis of B-cells. Plays a role in the migration of olfactory sensory neurons (OSNs) into the forebrain and the innervation of the olfactory bulb by the OSN axons during development. Required for the efficient tyrosine phosphorylation of BCAR1 in OSN axons. Functionally, important regulator of chemokine-induced, integrin-mediated T lymphocyte adhesion and migration, acting upstream of RAP1. Required for tissue-specific adhesion of T lymphocytes to peripheral tissues. Required for basal and CXCL2 stimulated serine-threonine phosphorylation of NEDD9. May be involved in the regulation of T-cell receptor-mediated IL2 production through the activation of the JNK pathway in T-cells. In terms of biological role, may be involved in the BCAR1/CAS-mediated JNK activation pathway. The protein is SH2 domain-containing protein 3C (SH2D3C) of Homo sapiens (Human).